Consider the following 461-residue polypeptide: Argininosuccinate lyase (461 aa).

The protein belongs to the lyase 1 family. Argininosuccinate lyase subfamily.

It is found in the cytoplasm. It catalyses the reaction 2-(N(omega)-L-arginino)succinate = fumarate + L-arginine. The protein operates within amino-acid biosynthesis; L-arginine biosynthesis; L-arginine from L-ornithine and carbamoyl phosphate: step 3/3. The sequence is that of Argininosuccinate lyase from Desulfitobacterium hafniense (strain DSM 10664 / DCB-2).